Reading from the N-terminus, the 314-residue chain is GDP-L-fucose synthase (314 aa).

NADP(+) contacts are provided by residues 15–21 (GHKGMVG) and 109–112 (LGSS). Tyr140 (proton donor/acceptor) is an active-site residue. NADP(+) contacts are provided by residues Lys144, 167 to 170 (PTNL), and His183. Substrate contacts are provided by Lys191, Trp206, Arg213, and Asp273.

It belongs to the NAD(P)-dependent epimerase/dehydratase family. Fucose synthase subfamily.

It carries out the reaction GDP-beta-L-fucose + NADP(+) = GDP-4-dehydro-alpha-D-rhamnose + NADPH + H(+). It functions in the pathway nucleotide-sugar biosynthesis; GDP-L-fucose biosynthesis via de novo pathway; GDP-L-fucose from GDP-alpha-D-mannose: step 2/2. Its function is as follows. Catalyzes the two-step NADP-dependent conversion of GDP-4-dehydro-6-deoxy-D-mannose to GDP-fucose, involving an epimerase and a reductase reaction. This Sinorhizobium fredii (strain NBRC 101917 / NGR234) protein is GDP-L-fucose synthase.